The sequence spans 1125 residues: Exportin-6 (1125 aa).

Ala-2 bears the N-acetylalanine mark. The region spanning 31-97 (IEELLNNFAQ…RSCLPKLLLA (67 aa)) is the Importin N-terminal domain. Ser-199 is subject to Phosphoserine. Phosphothreonine occurs at positions 201 and 204. Phosphoserine occurs at positions 208 and 224.

This sequence belongs to the exportin family. As to quaternary structure, found in a complex with XPO6, Ran, ACTB and PFN1. Interacts with ACTB. Interacts with ACTB in a RanGTP-dependent manner.

The protein localises to the nucleus. It is found in the cytoplasm. In terms of biological role, mediates the nuclear export of actin and profilin-actin complexes in somatic cells. The chain is Exportin-6 (Xpo6) from Mus musculus (Mouse).